We begin with the raw amino-acid sequence, 33 residues long: Dermaseptin-J7 (33 aa).

Valine 33 is subject to Valine amide.

In terms of tissue distribution, expressed by the skin glands.

Its subcellular location is the secreted. Its function is as follows. Has antimicrobial activity. The sequence is that of Dermaseptin-J7 from Phasmahyla jandaia (Jandaia leaf frog).